The primary structure comprises 244 residues: Recombination directionality factor (244 aa).

A disordered region spans residues 1–34; sequence MAKRSIWAGDEDNKPKKRETYADDTVGRFHSGYS. The span at 11 to 27 shows a compositional bias: basic and acidic residues; the sequence is EDNKPKKRETYADDTVG.

Interacts with the integrase.

In terms of biological role, recombination directionality factor that interacts directly with the integrase tetramer to activate excision and inhibit integration. The protein is Recombination directionality factor of Streptomyces coelicolor (Bacteriophage phi-C31).